The sequence spans 221 residues: Probable GTP-binding protein EngB (221 aa).

Residues 32–205 (GIPQIAFAGR…RKIVDSLITT (174 aa)) enclose the EngB-type G domain. GTP-binding positions include 40–47 (GRSNAGKS), 67–71 (GKTKL), 85–88 (DLPG), 152–155 (TKID), and 184–186 (VSN). The Mg(2+) site is built by Ser-47 and Thr-69.

This sequence belongs to the TRAFAC class TrmE-Era-EngA-EngB-Septin-like GTPase superfamily. EngB GTPase family. It depends on Mg(2+) as a cofactor.

Functionally, necessary for normal cell division and for the maintenance of normal septation. This chain is Probable GTP-binding protein EngB, found in Leptospira borgpetersenii serovar Hardjo-bovis (strain JB197).